We begin with the raw amino-acid sequence, 560 residues long: Nuclear receptor subfamily 5 group A member 2 (560 aa).

A disordered region spans residues 21–55 (IASAPGSETRHSPKREEQLREKRAGLPDRHRRPIP). Over residues 28–48 (ETRHSPKREEQLREKRAGLPD) the composition is skewed to basic and acidic residues. Residues 104–175 (EELCPVCGDK…KCIDVGMKLE (72 aa)) constitute a DNA-binding region (nuclear receptor). Residues cysteine 107, cysteine 110, cysteine 124, cysteine 127, cysteine 143, cysteine 149, cysteine 159, and cysteine 162 each contribute to the Zn(2+) site. NR C4-type zinc fingers lie at residues 107–127 (CPVCGDKVSGYHYGLLTCESC) and 143–167 (CIENQNCQIDKTQRKRCPYCRFKKC). Positions 173–188 (KLEAVRADRMRGGRNK) are C-terminal extension (CTE). The FTZ-F1 box signature appears at 189 to 208 (FGPMYKRDRALKQQKKALIR). A Glycyl lysine isopeptide (Lys-Gly) (interchain with G-Cter in SUMO1) cross-link involves residue lysine 289. An NR LBD domain is found at 319 to 558 (SIPHLILELL…NLLIEMLHAK (240 aa)). A phospholipid derivative contacts are provided by tyrosine 535 and lysine 539. Residues 547–558 (YNNLLIEMLHAK) form an AF-2 region.

Belongs to the nuclear hormone receptor family. NR5 subfamily. As to quaternary structure, monomer; Binds DNA as a monomer. Interacts with nuclear receptor corepressors NR0B1 and NR0B2; repressing NR5A2 nuclear receptor activity. Interacts with nuclear receptor coactivators CTNNB1, PPARGC1A and NCOA2; interaction takes place following ligand-binding and promotes target gene activation. Interacts (when sumoylated) with GPS2; interaction with GPS2 onto hepatic acute phase protein promoters prevents N-Cor corepressor complex dissociation. Interacts with HNF1A. Interacts with GRIP1. Sumoylated by SUMO1 at Lys-289 during the hepatic acute phase response, leading to promote interaction with GPS2 and prevent N-Cor corepressor complex dissociation.

The protein localises to the nucleus. It is found in the chromosome. Orphan nuclear receptor that binds DNA as a monomer to the 5'-TCAAGGCCA-3' sequence and controls expression of target genes: regulates key biological processes, such as early embryonic development, cholesterol and bile acid synthesis pathways, as well as liver and pancreas morphogenesis. Ligand-binding causes conformational change which causes recruitment of coactivators, promoting target gene activation. The specific ligand is unknown, but specific phospholipids, such as phosphatidylethanolamine, phosphatidylserine, dilauroyl phosphatidylcholine and diundecanoyl phosphatidylcholine can act as ligand in vitro. Acts as a pioneer transcription factor, which unwraps target DNA from histones and elicits local opening of closed chromatin. Plays a central role during preimplantation stages of embryonic development. Plays a minor role in zygotic genome activation (ZGA) by regulating a small set of two-cell stage genes. Plays a major role in morula development (2-16 cells embryos) by acting as a master regulator at the 8-cell stage, controlling expression of lineage-specifying transcription factors and genes involved in mitosis, telomere maintenance and DNA repair. Zygotic NR5A2 binds to both closed and open chromatin with other transcription factors, often at SINE B1/Alu repeats DNA elements, promoting chromatin accessibility at nearby regulatory regions. Also involved in the epiblast stage of development and embryonic stem cell pluripotency, by promoting expression of POU5F1/OCT4. Regulates other processes later in development, such as formation of connective tissue in lower jaw and middle ear, neural stem cell differentiation, ovarian follicle development and Sertoli cell differentiation. Involved in exocrine pancreas development and acinar cell differentiation. Acts as an essential transcriptional regulator of lipid metabolism. Key regulator of cholesterol 7-alpha-hydroxylase gene (CYP7A) expression in liver. Activates the transcription of CYP2C38. Also acts as a negative regulator of inflammation in different organs, such as intestine, liver and pancreas. Protects against intestinal inflammation via its ability to regulate glucocorticoid production. Plays an anti-inflammatory role during the hepatic acute phase response by acting as a corepressor: inhibits the hepatic acute phase response by preventing dissociation of the N-Cor corepressor complex. Acts as a regulator of immunity by promoting lymphocyte T-cell development, proliferation and effector functions. Also involved in resolution of endoplasmic reticulum stress in the liver. This chain is Nuclear receptor subfamily 5 group A member 2, found in Mus musculus (Mouse).